The chain runs to 776 residues: General transcription and DNA repair factor IIH helicase subunit XPD (776 aa).

The Helicase ATP-binding domain maps to 7–277; it reads DLLVYFPYSY…KKVDEKRLKD (271 aa). 42–49 lines the ATP pocket; it reads MPSGTGKT. Residues Cys-115, Cys-133, Cys-150, and Cys-184 each coordinate [4Fe-4S] cluster. Positions 228 to 231 match the DEAH box motif; sequence DEAH. The disordered stretch occupies residues 736–776; that stretch reads HVEKQSTSKPPQQQNSAINSTITTSTTTTTTTSTISETHLT. Polar residues predominate over residues 742–754; sequence TSKPPQQQNSAIN. The span at 755-776 shows a compositional bias: low complexity; it reads STITTSTTTTTTTSTISETHLT.

This sequence belongs to the helicase family. RAD3/XPD subfamily. Component of the 7-subunit TFIIH core complex composed of XPB/repB, XPD/repD, gtf2h1, gtf2h2, gtf2h3, gtf2h4 and gtf2h5, which is active in NER. The core complex associates with the 3-subunit CDK-activating kinase (CAK) module composed of cycH/cyclin H, cdk7 and mnat1 to form the 10-subunit holoenzyme (holo-TFIIH) active in transcription. Requires Mg(2+) as cofactor. The cofactor is [4Fe-4S] cluster.

The protein resides in the nucleus. It carries out the reaction Couples ATP hydrolysis with the unwinding of duplex DNA at the replication fork by translocating in the 5'-3' direction. This creates two antiparallel DNA single strands (ssDNA). The leading ssDNA polymer is the template for DNA polymerase III holoenzyme which synthesizes a continuous strand.. The enzyme catalyses ATP + H2O = ADP + phosphate + H(+). Its function is as follows. ATP-dependent 5'-3' DNA helicase, component of the general transcription and DNA repair factor IIH (TFIIH) core complex, which is involved in general and transcription-coupled nucleotide excision repair (NER) of damaged DNA and, when complexed to CDK-activating kinase (CAK), in transcription by RNA polymerase II. In NER, TFIIH acts by opening DNA around the lesion to allow the excision of the damaged oligonucleotide and its replacement by a new DNA fragment. The ATP-dependent helicase activity of XPD/repD is required for DNA opening. In transcription, TFIIH has an essential role in transcription initiation. When the pre-initiation complex (PIC) has been established, TFIIH is required for promoter opening and promoter escape. Phosphorylation of the C-terminal tail (CTD) of the largest subunit of RNA polymerase II by the kinase module CAK controls the initiation of transcription. XPD/repD acts by forming a bridge between CAK and the core-TFIIH complex. The polypeptide is General transcription and DNA repair factor IIH helicase subunit XPD (Dictyostelium discoideum (Social amoeba)).